Reading from the N-terminus, the 428-residue chain is C4-dicarboxylate transport protein 1 (428 aa).

A run of 8 helical transmembrane segments spans residues 5–27 (FYKI…GHFE), 42–64 (IQLI…IAGM), 77–99 (ALLY…GHIF), 150–167 (ILQI…LSAM), 188–210 (IVHV…TIGK), 225–247 (TFYL…LTGF), 314–336 (IFIS…LAVA), and 351–373 (FITL…VLIL).

Belongs to the dicarboxylate/amino acid:cation symporter (DAACS) (TC 2.A.23) family.

The protein resides in the cell inner membrane. Functionally, responsible for the transport of dicarboxylates such as succinate, fumarate, and malate from the periplasm across the membrane. This chain is C4-dicarboxylate transport protein 1 (dctA1), found in Ralstonia nicotianae (strain ATCC BAA-1114 / GMI1000) (Ralstonia solanacearum).